The primary structure comprises 207 residues: Large ribosomal subunit protein uL4 (207 aa).

A disordered region spans residues 49-78 (HAVKNRSAVSGGGRKPWRQKGTGRARQGSI).

It belongs to the universal ribosomal protein uL4 family. In terms of assembly, part of the 50S ribosomal subunit.

One of the primary rRNA binding proteins, this protein initially binds near the 5'-end of the 23S rRNA. It is important during the early stages of 50S assembly. It makes multiple contacts with different domains of the 23S rRNA in the assembled 50S subunit and ribosome. Functionally, forms part of the polypeptide exit tunnel. This Streptococcus agalactiae serotype Ia (strain ATCC 27591 / A909 / CDC SS700) protein is Large ribosomal subunit protein uL4.